The chain runs to 380 residues: Apolipoprotein A-IV (380 aa).

Positions 1 to 20 (MFLKAVVLSLALVAVTGAEA) are cleaved as a signal peptide. 13 repeat units span residues 33–54 (DYFS…KSEL), 60–81 (TLFQ…KKLV), 82–103 (PFAT…EEIR), 115–136 (PHAT…QRLG), 137–158 (PYAE…RQLT), 159–180 (PYVE…ASLA), 181–202 (PYAE…GRLT), 203–224 (PYAD…RSLA), 225–246 (PYAQ…FQMK), 247–268 (KHAE…QGLV), 269–286 (PLVN…EDLQ), 287–308 (KSLA…RTVG), and 309–330 (PYGE…QKLG). Residues 33 to 330 (DYFSQLGNNA…QLDTLRQKLG (298 aa)) form a 13 X 22 AA approximate tandem repeats region. A disordered region spans residues 361 to 380 (KESQAPALPAQEEMPVPLGG).

The protein belongs to the apolipoprotein A1/A4/E family. Homodimer. As to expression, secreted in plasma.

Its subcellular location is the secreted. Its function is as follows. May have a role in chylomicrons and VLDL secretion and catabolism. Required for efficient activation of lipoprotein lipase by ApoC-II; potent activator of LCAT. Apoa-IV is a major component of HDL and chylomicrons. This chain is Apolipoprotein A-IV (APOA4), found in Bos taurus (Bovine).